Here is a 111-residue protein sequence, read N- to C-terminus: Cytochrome b-c1 complex subunit 7 (111 aa).

N-acetylalanine is present on Ala-2. N6-acetyllysine is present on Lys-19. Lys-78 carries the post-translational modification N6-acetyllysine; alternate. Lys-78 is modified (N6-succinyllysine; alternate). Lys-83 carries the post-translational modification N6-acetyllysine. Lys-88 carries the N6-acetyllysine; alternate modification. Lys-88 bears the N6-succinyllysine; alternate mark. Lys-96 bears the N6-acetyllysine mark.

Belongs to the UQCRB/QCR7 family. In terms of assembly, component of the ubiquinol-cytochrome c oxidoreductase (cytochrome b-c1 complex, complex III, CIII), a multisubunit enzyme composed of 11 subunits. The complex is composed of 3 respiratory subunits cytochrome b, cytochrome c1 and Rieske protein UQCRFS1, 2 core protein subunits UQCRC1/QCR1 and UQCRC2/QCR2, and 6 low-molecular weight protein subunits UQCRH/QCR6, UQCRB/QCR7, UQCRQ/QCR8, UQCR10/QCR9, UQCR11/QCR10 and subunit 9, the cleavage product of Rieske protein UQCRFS1. The complex exists as an obligatory dimer and forms supercomplexes (SCs) in the inner mitochondrial membrane with NADH-ubiquinone oxidoreductase (complex I, CI) and cytochrome c oxidase (complex IV, CIV), resulting in different assemblies (supercomplex SCI(1)III(2)IV(1) and megacomplex MCI(2)III(2)IV(2)).

It is found in the mitochondrion inner membrane. In terms of biological role, component of the ubiquinol-cytochrome c oxidoreductase, a multisubunit transmembrane complex that is part of the mitochondrial electron transport chain which drives oxidative phosphorylation. The respiratory chain contains 3 multisubunit complexes succinate dehydrogenase (complex II, CII), ubiquinol-cytochrome c oxidoreductase (cytochrome b-c1 complex, complex III, CIII) and cytochrome c oxidase (complex IV, CIV), that cooperate to transfer electrons derived from NADH and succinate to molecular oxygen, creating an electrochemical gradient over the inner membrane that drives transmembrane transport and the ATP synthase. The cytochrome b-c1 complex catalyzes electron transfer from ubiquinol to cytochrome c, linking this redox reaction to translocation of protons across the mitochondrial inner membrane, with protons being carried across the membrane as hydrogens on the quinol. In the process called Q cycle, 2 protons are consumed from the matrix, 4 protons are released into the intermembrane space and 2 electrons are passed to cytochrome c. In Bos taurus (Bovine), this protein is Cytochrome b-c1 complex subunit 7 (UQCRB).